A 137-amino-acid chain; its full sequence is Transcription antitermination protein NusB (137 aa).

Belongs to the NusB family.

Functionally, involved in transcription antitermination. Required for transcription of ribosomal RNA (rRNA) genes. Binds specifically to the boxA antiterminator sequence of the ribosomal RNA (rrn) operons. The chain is Transcription antitermination protein NusB from Actinobacillus pleuropneumoniae serotype 5b (strain L20).